Reading from the N-terminus, the 86-residue chain is High affinity immunoglobulin epsilon receptor subunit gamma (86 aa).

The N-terminal stretch at M1–A18 is a signal peptide. Residues L19–Q23 lie on the Extracellular side of the membrane. Residues L24 to C44 traverse the membrane as a helical segment. Topologically, residues R45–Q86 are cytoplasmic. The ITAM domain occupies T54–E82. A Phosphotyrosine modification is found at Y65. S69 is modified (phosphoserine). The residue at position 76 (Y76) is a Phosphotyrosine. The residue at position 78 (T78) is a Phosphothreonine.

The protein belongs to the CD3Z/FCER1G family. IgE Fc receptor is a tetramer of an alpha chain, a beta chain, and two disulfide linked gamma chains. Associates with FCGR1A; forms a functional signaling complex. The signaling subunit of immunoglobulin gamma (IgG) Fc receptor complex. As a homodimer or a heterodimer of CD247 and FCER1G, associates with the ligand binding subunit FCGR3A to form a functional receptor complex. Associates with CLEC6A. Interacts with CLEC4E. Interacts (via ITAM domain) with SYK (via SH2 domains); activates SYK, enabling integrin-mediated activation of neutrophils and macrophages. Interacts with CSF2RB and recruits SYK in response to IL3 stimulation; this interaction is direct. Interacts with CD300LH; the interaction may be indirect. Interacts with CD300LD. Interacts with TARM1.

It localises to the cell membrane. Its function is as follows. Adapter protein containing an immunoreceptor tyrosine-based activation motif (ITAM) that transduces activation signals from various immunoreceptors. As a component of the high-affinity immunoglobulin E (IgE) receptor, mediates allergic inflammatory signaling in mast cells. As a constitutive component of interleukin-3 receptor complex, selectively mediates interleukin 4/IL4 production by basophils priming T-cells toward effector T-helper 2 subset. Associates with pattern recognition receptors CLEC4D and CLEC4E to form a functional signaling complex in myeloid cells. Binding of mycobacterial trehalose 6,6'-dimycolate (TDM) to this receptor complex leads to phosphorylation of ITAM, triggering activation of SYK, CARD9 and NF-kappa-B, consequently driving maturation of antigen-presenting cells and shaping antigen-specific priming of T-cells toward effector T-helper 1 and T-helper 17 cell subtypes. May function cooperatively with other activating receptors. Functionally linked to integrin beta-2/ITGB2-mediated neutrophil activation. Also involved in integrin alpha-2/ITGA2-mediated platelet activation. This chain is High affinity immunoglobulin epsilon receptor subunit gamma (FCER1G), found in Cavia porcellus (Guinea pig).